The following is a 473-amino-acid chain: MAVKTYQAGVTQYRQSYWQPDYVPLDTDILACFKITPQPGVDREEAAAAVAAESSCGTWTTVWTDLLTDLDYYKGRAYRLEDVPGDDTCYYAFIAYPIDLFEEGSVVNVFTSLVGNVFGFKAVRALRLEDLRFPIAYVKTCGGPPHGIQVERDRLNKYGRPMLGCTIKPKLGLSAKNYGRACYEALRGGLDFTKDDENINSQPFMRWRDRFDFVMEAVQKAEQETGERKGHYLNVTAPTPEEMYKRAEHAKEIGAPIIMHDYLAGGLCANAGLANWCRDNGILLHIHRAMHAVIDRNPHHGIHFRVLTKILRLSGGDHLHTGTVVGKLEGDRASTLGWIDLLRESFVPEDRSRGIFFDQDWGSMPGCFAVASGGIHVWHMPALVTIFGDDSVLQFGGGTLGHPWGNAAGAHANRVALEACVQARAEGRQLEKEGKDILTAAAAHSPELKIAMETWKEIKFEFEAVDQLAIANK.

Substrate-binding residues include asparagine 116 and threonine 166. Lysine 168 (proton acceptor) is an active-site residue. Lysine 170 serves as a coordination point for substrate. Positions 194, 196, and 197 each coordinate Mg(2+). At lysine 194 the chain carries N6-carboxylysine. The active-site Proton acceptor is histidine 287. Substrate-binding residues include arginine 288, histidine 320, and serine 372.

This sequence belongs to the RuBisCO large chain family. Type I subfamily. As to quaternary structure, heterohexadecamer of 8 large chains and 8 small chains. It depends on Mg(2+) as a cofactor.

The catalysed reaction is 2 (2R)-3-phosphoglycerate + 2 H(+) = D-ribulose 1,5-bisphosphate + CO2 + H2O. It catalyses the reaction D-ribulose 1,5-bisphosphate + O2 = 2-phosphoglycolate + (2R)-3-phosphoglycerate + 2 H(+). Its function is as follows. RuBisCO catalyzes two reactions: the carboxylation of D-ribulose 1,5-bisphosphate, the primary event in carbon dioxide fixation, as well as the oxidative fragmentation of the pentose substrate. Both reactions occur simultaneously and in competition at the same active site. This is Ribulose bisphosphate carboxylase large chain 3 from Nitrobacter hamburgensis (strain DSM 10229 / NCIMB 13809 / X14).